Consider the following 249-residue polypeptide: tRNA pseudouridine synthase A (249 aa).

Asp53 serves as the catalytic Nucleophile. Tyr111 is a binding site for substrate.

The protein belongs to the tRNA pseudouridine synthase TruA family. In terms of assembly, homodimer.

The catalysed reaction is uridine(38/39/40) in tRNA = pseudouridine(38/39/40) in tRNA. Its function is as follows. Formation of pseudouridine at positions 38, 39 and 40 in the anticodon stem and loop of transfer RNAs. This chain is tRNA pseudouridine synthase A, found in Streptococcus pneumoniae (strain Taiwan19F-14).